We begin with the raw amino-acid sequence, 388 residues long: Diacylglycerol O-acyltransferase 2 (388 aa).

At 1–69 (MKTLIAAYSG…NRSKVEKHLQ (69 aa)) the chain is on the cytoplasmic side. A helical transmembrane segment spans residues 70–88 (VISVLQWVLSFLVLGVACS). The Lumenal segment spans residues 89–92 (VILM). A helical membrane pass occupies residues 93–112 (YTFCTDCWLIAALYFTWLAF). The Cytoplasmic portion of the chain corresponds to 113-388 (DWNTPKKGGR…LPETEVLEVN (276 aa)).

The protein belongs to the diacylglycerol acyltransferase family. Forms multimeric complexes consisting of several DGAT2 subunits. Interacts with SLC27A1 and this interaction is enhanced in the presence of ZFYVE1.

The protein localises to the endoplasmic reticulum membrane. It is found in the lipid droplet. The protein resides in the cytoplasm. Its subcellular location is the perinuclear region. The catalysed reaction is an acyl-CoA + a 1,2-diacyl-sn-glycerol = a triacyl-sn-glycerol + CoA. It catalyses the reaction all-trans-retinol + an acyl-CoA = an all-trans-retinyl ester + CoA. It carries out the reaction 2-(9Z-octadecenoyl)-glycerol + (9Z)-octadecenoyl-CoA = 1,2-di-(9Z-octadecenoyl)-sn-glycerol + CoA. The enzyme catalyses 1,2-di-(9Z-octadecenoyl)-sn-glycerol + (9Z)-octadecenoyl-CoA = 1,2,3-tri-(9Z-octadecenoyl)-glycerol + CoA. The catalysed reaction is all-trans-retinol + hexadecanoyl-CoA = all-trans-retinyl hexadecanoate + CoA. It catalyses the reaction 1-O-(9Z-octadecenyl)-glycerol + (9Z)-octadecenoyl-CoA = 1-O-(9Z-octadecyl)-3-(9Z-octadecenoyl)-glycerol + CoA. It carries out the reaction 1-(9Z-octadecenoyl)-glycerol + (9Z)-octadecenoyl-CoA = 1,2-di-(9Z-octadecenoyl)-glycerol + CoA. The enzyme catalyses 1,2-di-(9Z-octadecenoyl)-sn-glycerol + hexadecanoyl-CoA = 1,2-di-(9Z)-octadecenoyl-3-hexadecanoyl-sn-glycerol + CoA. The catalysed reaction is 1,3-di-(9Z-octadecenoyl)-glycerol + (9Z)-octadecenoyl-CoA = 1,2,3-tri-(9Z-octadecenoyl)-glycerol + CoA. It catalyses the reaction 2,3-di-(9Z)-octadecenoyl-sn-glycerol + (9Z)-octadecenoyl-CoA = 1,2,3-tri-(9Z-octadecenoyl)-glycerol + CoA. It carries out the reaction 2-(9Z-octadecenoyl)-glycerol + hexadecanoyl-CoA = 1-hexadecanoyl-2-(9Z-octadecenoyl)-sn-glycerol + CoA. The protein operates within glycerolipid metabolism; triacylglycerol biosynthesis. With respect to regulation, inhibited by niacin. Essential acyltransferase that catalyzes the terminal and only committed step in triacylglycerol synthesis by using diacylglycerol and fatty acyl CoA as substrates. Required for synthesis and storage of intracellular triglycerides. Probably plays a central role in cytosolic lipid accumulation. In liver, is primarily responsible for incorporating endogenously synthesized fatty acids into triglycerides. Also functions as an acyl-CoA retinol acyltransferase (ARAT). Also able to use 1-monoalkylglycerol (1-MAkG) as an acyl acceptor for the synthesis of monoalkyl-monoacylglycerol (MAMAG). The protein is Diacylglycerol O-acyltransferase 2 of Rattus norvegicus (Rat).